A 749-amino-acid polypeptide reads, in one-letter code: Cytosolic phospholipase A2 (749 aa).

The C2 domain maps to 1 to 124 (MASIDPYQHI…GEKKQVPFTF (124 aa)). The segment at 1 to 178 (MASIDPYQHI…LRKLLGPEKT (178 aa)) is phospholipid binding. Residues Asp-40, Thr-41, Asp-43, Asn-65, Asp-93, Ala-94, and Asn-95 each contribute to the Ca(2+) site. The PLA2c domain occupies 138-740 (VCSSTDLRFS…NDVEARKLLH (603 aa)). Ser-229 functions as the Nucleophile in the catalytic mechanism. The tract at residues 417-458 (MEEEIENLKPKHILGNDSSDSDDEMQEPKGTENSKAEEEYQR) is disordered. A compositionally biased stretch (basic and acidic residues) spans 442 to 457 (QEPKGTENSKAEEEYQ). The active-site Proton acceptor is the Asp-549.

Its subcellular location is the cytoplasm. The protein localises to the cytoplasmic vesicle. The catalysed reaction is a 1,2-diacyl-sn-glycero-3-phosphocholine + H2O = a 1-acyl-sn-glycero-3-phosphocholine + a fatty acid + H(+). It catalyses the reaction a 1-acyl-sn-glycero-3-phosphocholine + H2O = sn-glycerol 3-phosphocholine + a fatty acid + H(+). With respect to regulation, stimulated by agonists such as ATP, EGF, thrombin and bradykinin as well as by cytosolic Ca(2+). In terms of biological role, selectively hydrolyzes arachidonyl phospholipids in the sn-2 position releasing arachidonic acid. Together with its lysophospholipid activity, it is implicated in the initiation of the inflammatory response. This Xenopus tropicalis (Western clawed frog) protein is Cytosolic phospholipase A2 (pla2g4a).